We begin with the raw amino-acid sequence, 328 residues long: MNPALPEDVKTLLTDLETFISDVLKGETLSKKAKEKKEVLIKRLKDIKHSHSLEFQAETDDLEENDGFPLPPDAVSIASDRDKDEELPYDGSFYPLVAAQDLEYLRAGYLEKRRKDHSFFASEWQKRWCVCTNSMFYYYGSDKDKQQKGAFSLDGYRAKMNDTLRKDAKKDCCFEIFAPDKRVYQFAASSPKEAEEWVNIIMNSRGNIPTEDEELYDDVNQEVDASHEEDIYEELPEESEKPVTEIETPKATPVPVNNTSGKENTDYANFYRGLWDCTGDHPDELSFKHGDTIYILSKEYNTYGWWVGEMKGTIGLVPKAYIMEMYDI.

Positions 103–206 constitute a PH domain; the sequence is EYLRAGYLEK…WVNIIMNSRG (104 aa). Positions 231 to 262 are disordered; sequence IYEELPEESEKPVTEIETPKATPVPVNNTSGK. The segment covering 238-248 has biased composition (basic and acidic residues); sequence ESEKPVTEIET. In terms of domain architecture, SH3 spans 266–327; it reads DYANFYRGLW…PKAYIMEMYD (62 aa).

This sequence belongs to the SKAP family. Post-translationally, phosphorylated on tyrosines.

It localises to the cytoplasm. Its function is as follows. May be involved in B-cell and macrophage adhesion processes. May play a role in src signaling pathway. In Xenopus tropicalis (Western clawed frog), this protein is Src kinase-associated phosphoprotein 2 (skap2).